The sequence spans 585 residues: Complement component C8 alpha chain (585 aa).

Positions 1–20 (MLVAAFFTLFLVTCQPAVTA) are cleaved as a signal peptide. Residues 21 to 30 (QEKVNQRVNR) constitute a propeptide that is removed on maturation. Positions 38 to 91 (DCQLSSWSEWTDCFPCQDTKYRHRSLLQPNKFGGTICSGDIWDRASCYSPTACL) constitute a TSP type-1 1 domain. 7 disulfide bridges follow: C39–C74, C50–C84, C53–C90, C96–C108, C102–C121, C115–C130, and C140–C177. W44 is a glycosylation site (C-linked (Man) tryptophan). In terms of domain architecture, LDL-receptor class A spans 94-132 (AQCGQDFQCKETGRCLKRHLVCNGENDCLDGSDEDNCED). Ca(2+)-binding residues include L113, N116, E118, D120, D126, and E127. The 364-residue stretch at 136 to 499 (TESDCAQYDP…QYLMEFNACR (364 aa)) folds into the MACPF domain. A run of 4 beta stranded transmembrane segments spans residues 248–256 (AGVTISAGL), 259–266 (SPLLGTVG), 377–384 (GGFGEIQY), and 391–396 (AQGILS). An intrachain disulfide couples C375 to C400. N438 carries an N-linked (GlcNAc...) asparagine glycan. 4 disulfide bridges follow: C498–C545, C500–C516, C503–C518, and C520–C529. An EGF-like domain is found at 499–530 (RCGPCFNNGKPILEGTSCRCQCSLGLQGPACE). The TSP type-1 2 domain maps to 540-584 (DGHWSCWGSWSPCTAGTRERRRECNNPAPQNGGAPCPGWRVQTQA). W543, W546, and W549 each carry a C-linked (Man) tryptophan glycan. Disulfide bonds link C552/C585 and C563/C575.

It belongs to the complement C6/C7/C8/C9 family. In terms of assembly, heterotrimer of 3 chains: alpha (C8A), beta (C8B) and gamma (C8G); the alpha and gamma chains are disulfide bonded. Component of the membrane attack complex (MAC), composed of complement C5b, C6, C7, C8A, C8B, C8G and multiple copies of the pore-forming subunit C9.

It is found in the secreted. The protein resides in the target cell membrane. Its activity is regulated as follows. Membrane attack complex (MAC) assembly is inhibited by CD59, thereby protecting self-cells from damage during complement activation. CD59 acts by binding to the beta-haipins of C8 (C8A and C8B), forming an intermolecular beta-sheet that prevents incorporation of the multiple copies of C9 required for complete formation of the osmolytic pore. MAC assembly is also inhibited by clusterin (CLU) chaperones that inhibit polymerization of C9. In terms of biological role, component of the membrane attack complex (MAC), a multiprotein complex activated by the complement cascade, which inserts into a target cell membrane and forms a pore, leading to target cell membrane rupture and cell lysis. The MAC is initiated by proteolytic cleavage of C5 into complement C5b in response to the classical, alternative, lectin and GZMK complement pathways. The complement pathways consist in a cascade of proteins that leads to phagocytosis and breakdown of pathogens and signaling that strengthens the adaptive immune system. C8A, together with C8B and C8G, inserts into the target membrane, but does not form pores by itself. During MAC assembly, associates with C5b, C6 and C7 to form the C5b8 intermediate complex that inserts into the target membrane and traverses the bilayer increasing membrane rigidity. The polypeptide is Complement component C8 alpha chain (C8A) (Oryctolagus cuniculus (Rabbit)).